We begin with the raw amino-acid sequence, 100 residues long: C-X-C motif chemokine 2 (100 aa).

Residues 1–31 (MAPPTRQLLNAVLVLLLLLATNHQGTGVVVA) form the signal peptide. Disulfide bonds link C36–C62 and C38–C78.

The protein belongs to the intercrine alpha (chemokine CxC) family. Homotetramer. In terms of tissue distribution, at least expressed in the lung and trachea.

Its subcellular location is the secreted. Functionally, chemotactic for human polymorphonuclear leukocytes but does not induce chemokinesis or an oxidative burst. Contributes to neutrophil activation during inflammation. In Rattus norvegicus (Rat), this protein is C-X-C motif chemokine 2 (Cxcl2).